The chain runs to 248 residues: 2,3-bisphosphoglycerate-dependent phosphoglycerate mutase (248 aa).

Substrate contacts are provided by residues 8-15 (RHGESTWN), 21-22 (TG), arginine 60, 87-90 (ERHY), lysine 98, 114-115 (RR), and 183-184 (GN). Residue histidine 9 is the Tele-phosphohistidine intermediate of the active site. Glutamate 87 (proton donor/acceptor) is an active-site residue.

The protein belongs to the phosphoglycerate mutase family. BPG-dependent PGAM subfamily.

It carries out the reaction (2R)-2-phosphoglycerate = (2R)-3-phosphoglycerate. Its pathway is carbohydrate degradation; glycolysis; pyruvate from D-glyceraldehyde 3-phosphate: step 3/5. In terms of biological role, catalyzes the interconversion of 2-phosphoglycerate and 3-phosphoglycerate. The polypeptide is 2,3-bisphosphoglycerate-dependent phosphoglycerate mutase (Solibacter usitatus (strain Ellin6076)).